Here is a 344-residue protein sequence, read N- to C-terminus: Homoserine O-acetyltransferase (344 aa).

Catalysis depends on C142, which acts as the Acyl-thioester intermediate. Positions 163 and 192 each coordinate substrate. The active-site Proton acceptor is the H235. Residue E237 is part of the active site. Residue R249 participates in substrate binding.

The protein belongs to the MetA family.

It is found in the cytoplasm. It catalyses the reaction L-homoserine + acetyl-CoA = O-acetyl-L-homoserine + CoA. Its pathway is amino-acid biosynthesis; L-methionine biosynthesis via de novo pathway; O-acetyl-L-homoserine from L-homoserine: step 1/1. Transfers an acetyl group from acetyl-CoA to L-homoserine, forming acetyl-L-homoserine. The protein is Homoserine O-acetyltransferase of Bifidobacterium adolescentis (strain ATCC 15703 / DSM 20083 / NCTC 11814 / E194a).